The sequence spans 126 residues: Aspartate 1-decarboxylase (126 aa).

Serine 25 (schiff-base intermediate with substrate; via pyruvic acid) is an active-site residue. Serine 25 carries the post-translational modification Pyruvic acid (Ser). Threonine 57 lines the substrate pocket. Tyrosine 58 serves as the catalytic Proton donor. Glycine 73–alanine 75 lines the substrate pocket.

The protein belongs to the PanD family. Heterooctamer of four alpha and four beta subunits. Pyruvate is required as a cofactor. In terms of processing, is synthesized initially as an inactive proenzyme, which is activated by self-cleavage at a specific serine bond to produce a beta-subunit with a hydroxyl group at its C-terminus and an alpha-subunit with a pyruvoyl group at its N-terminus.

The protein resides in the cytoplasm. The catalysed reaction is L-aspartate + H(+) = beta-alanine + CO2. It participates in cofactor biosynthesis; (R)-pantothenate biosynthesis; beta-alanine from L-aspartate: step 1/1. In terms of biological role, catalyzes the pyruvoyl-dependent decarboxylation of aspartate to produce beta-alanine. The protein is Aspartate 1-decarboxylase of Erwinia tasmaniensis (strain DSM 17950 / CFBP 7177 / CIP 109463 / NCPPB 4357 / Et1/99).